A 500-amino-acid polypeptide reads, in one-letter code: Probable cytosol aminopeptidase (500 aa).

Mn(2+) contacts are provided by lysine 268 and aspartate 273. Lysine 280 is a catalytic residue. Mn(2+) is bound by residues aspartate 291, aspartate 350, and glutamate 352. Residue arginine 354 is part of the active site.

This sequence belongs to the peptidase M17 family. The cofactor is Mn(2+).

It is found in the cytoplasm. The enzyme catalyses Release of an N-terminal amino acid, Xaa-|-Yaa-, in which Xaa is preferably Leu, but may be other amino acids including Pro although not Arg or Lys, and Yaa may be Pro. Amino acid amides and methyl esters are also readily hydrolyzed, but rates on arylamides are exceedingly low.. The catalysed reaction is Release of an N-terminal amino acid, preferentially leucine, but not glutamic or aspartic acids.. Functionally, presumably involved in the processing and regular turnover of intracellular proteins. Catalyzes the removal of unsubstituted N-terminal amino acids from various peptides. This chain is Probable cytosol aminopeptidase, found in Aromatoleum aromaticum (strain DSM 19018 / LMG 30748 / EbN1) (Azoarcus sp. (strain EbN1)).